The primary structure comprises 75 residues: Acyl carrier protein (75 aa).

The 75-residue stretch at 1 to 75 folds into the Carrier domain; the sequence is MIFEKVRDII…DVVEYLSNLE (75 aa). O-(pantetheine 4'-phosphoryl)serine is present on Ser35.

This sequence belongs to the acyl carrier protein (ACP) family. Post-translationally, 4'-phosphopantetheine is transferred from CoA to a specific serine of apo-ACP by AcpS. This modification is essential for activity because fatty acids are bound in thioester linkage to the sulfhydryl of the prosthetic group.

The protein localises to the cytoplasm. The protein operates within lipid metabolism; fatty acid biosynthesis. Carrier of the growing fatty acid chain in fatty acid biosynthesis. This Thermoanaerobacter pseudethanolicus (strain ATCC 33223 / 39E) (Clostridium thermohydrosulfuricum) protein is Acyl carrier protein.